Consider the following 1444-residue polypeptide: MDIVRMGSVASGGGSVRRTASSWRGTSGRSDAFGRSVREEDDEEALKWAAIEKLPTYDRMRKGILTAGGVEEVDIGGLGLQERRNLIERLVRTAEEDNERFLLKLRDRMERVGIDNPTIEVRFENLSIDAEAYVGNRGIPTFTNFFSNKIMDVLSAMRIVSSGKRPISILHDISGIIRPGRMSLLLGPPGSGKTSLLLALAGKLDSTLKVSGRVTYNGHDMDEFVPQRTSAYIGQHDLHIGEMTVRETLAFSARCQGVGTRYDMLTELSRREKEASIKPDPDIDVYMKAISVEGQESVVTDYILKILGLEICADTMVGDAMIRGISGGQKKRVTTGEMLVGPAKALFMDEISTGLDSSTTYQIVNSLRQSVHILGGTALIALLQPAPETYDLFDDIVLLSEGQIVYQGPRENILEFFEAMGFKCPERKGVADFLQEVTSRKDQHQYWCRRDEPYRYISVNDFSEAFKEFHVGRNLGSELRVPFDRTRNHPAALTTSRYGISKMELTKACFSREWLLMKRNSFVYIFKILQLIILGSIGMTVFLRTKMHRRSVEDGAIFLGAMFLGLVTHLFNGFAELAMSIAKLPIFYKQRDLLFYPSWAYALPTWVLKIPISFLECAVWICMTYYVMGFDPNIERFFRHYVLLVLISQMASGLFRLLAALGREMVVADTFGSFAQLILLVLGGFLISRENIKKWWIWGYWSSPLMYAQNAIAVNEFLGHSWNKVVDPTQSNDTLGVQVLKVRGIFVDANWYWIGVGALLGYIMLFNILFILFLEWLDPLGKGQAVVSEEELREKHVNRTGENVELLTLGTDSQNSPSDANAGRGEITGADTRKRGMVLPFTPLSITFDNIRYSVDMPQEMKDKGVTEDRLLLLKGVSGAFRPGVLTALMGVSGAGKTTLMDVLAGRKTGGYIEGDISISGYPKKQETFARIAGYCEQNDIHSPHVTVYESLLYSAWLRLPSEVDSEARKMFVEEVMELVELTSLRGALVGLPGVNGLSTEQRKRLTIAVELVANPSIIFMDEPTSGLDARAAAIVMRTVRNTVDTGRTVVCTIHQPSIDIFEAFDELFLMKRGGEEIYVGPLGHNSCHLINYFEGIQGVRKIKDGYNPATWMLEVTTLAQEDILGINFAEVYRNSDLYQRNKTLISELSTPPPGSTDLHFPTQFSQPFFTQCMACLWKQHKSYWRNPSYTATRIFFTTVIALIFGTIFLNLGKKINKRLDLFNSLGSMYAAVLFIGIQNGQTVQPIVDVERTVFYREKAAGMYSALPYAFAQVLIEIPHIFLQTVVYGLIVYSLIGFDWTVEKFFWYMFFMFFTFMYFTFYGMMAVAMTPNSDIAAIVSTAFYCIWNIFAGFLIPRPRIPIWWRWYSWACPVAWTLYGLVASQYGDITNSTLEDGEVVQDYIRRYFGFRHDYLGYVATAVVGFAALFAFVFAFSIKVFNFQRR.

The disordered stretch occupies residues Met-1–Ser-36. The span at Thr-19–Arg-29 shows a compositional bias: polar residues. The ABC transporter 1 domain occupies Leu-154–Glu-426. Gly-187–Thr-194 serves as a coordination point for ATP. The 214-residue stretch at Glu-504 to Phe-717 folds into the ABC transmembrane type-2 1 domain. The next 6 helical transmembrane spans lie at Phe-522–Phe-542, Gly-555–Ala-575, Ile-610–Phe-630, Val-642–Gly-662, Val-667–Ile-687, and Ile-754–Leu-774. One can recognise an ABC transporter 2 domain in the interval Ile-846–Gln-1098. ATP is bound at residue Gly-891–Thr-898. Residues Thr-1171–Tyr-1385 enclose the ABC transmembrane type-2 2 domain. Helical transmembrane passes span Ala-1192 to Leu-1212, Leu-1220 to Asn-1240, Ile-1278 to Phe-1298, Phe-1305 to Met-1325, Ile-1335 to Ile-1355, Ile-1362 to Ala-1382, and Leu-1414 to Phe-1434.

This sequence belongs to the ABC transporter superfamily. ABCG family. PDR (TC 3.A.1.205) subfamily.

The protein localises to the membrane. Functionally, may be a general defense protein. The sequence is that of ABC transporter G family member 39 from Oryza sativa subsp. japonica (Rice).